We begin with the raw amino-acid sequence, 2156 residues long: Oxygen-regulated protein 1 (2156 aa).

Residues 1-19 (MSDTPSTGFSIIHPTSSEG) are compositionally biased toward polar residues. The segment at 1-25 (MSDTPSTGFSIIHPTSSEGQVPPPR) is disordered. Doublecortin domains are found at residues 36-118 (KRIS…VDLD) and 154-233 (RSLV…GNYD). Disordered regions lie at residues 353 to 375 (VSKT…RTES), 666 to 686 (SSVA…SRYQ), 1438 to 1458 (DMEE…MTSS), and 1590 to 1621 (DWSD…TQEK).

As to quaternary structure, interacts (via the doublecortin domains) with microtubules. Interacts with RP1L1. Interacts with MAK. As to expression, expressed in retina. Not expressed in heart, brain, placenta, lung, liver, skeletal muscle, kidney, spleen and pancreas.

Its subcellular location is the cytoplasm. It is found in the cytoskeleton. It localises to the cilium axoneme. The protein localises to the cell projection. The protein resides in the cilium. Its subcellular location is the photoreceptor outer segment. Microtubule-associated protein regulating the stability and length of the microtubule-based axoneme of photoreceptors. Required for the differentiation of photoreceptor cells, it plays a role in the organization of the outer segment of rod and cone photoreceptors ensuring the correct orientation and higher-order stacking of outer segment disks along the photoreceptor axoneme. The protein is Oxygen-regulated protein 1 (RP1) of Homo sapiens (Human).